The following is a 541-amino-acid chain: MPPPLQAHRLLISHRRLPSPARRRFTAASSLQSAPATTLAPGPATSSILSIRESLLSGERTAADITSEYLSRLRRTEPSLRSFIHVADAAAEREAEELDRRIASGEKDAVGPLAGVLVGVKDNLCTANMPSTGGSRILDGYRPAYDATAVRRLQEAGAIVVGKTNLDEFGMGSTTEGSAFQVTTNPWDDSRVPGGSSGGSASAVSARQCVVSLGSDTGGSVRQPASFCGVVGLKPTYGRVSRFGLMAYASSLDVVGCFGSSVFDTATILSVVAGHDKMDSTSSSQVVPDYASELVSLDLLESKPLAGLRIGIIQETLGEGVANGVISSIKGAASHLEQLGSVVEEVSLPSFSLGLPAYYILASSEASSNLSRYDGIRYGRQFSADDLNELYGESRANGLGHEVKMRILMGTYALSAGYYDAYYKRAQQVRTLVKESFKDALERYDILISPAAPSAAYKIGEKINDPLAMYAGDILTVNVNLAGLPALVVPCGFVEGGPAGLPVGLQLIGSPFCEGNLLRVGHIFEQTLQNLSFVPPLLAES.

Residues lysine 121 and serine 196 each act as charge relay system in the active site. Serine 220 serves as the catalytic Acyl-ester intermediate.

Belongs to the amidase family. GatA subfamily. As to quaternary structure, subunit of the heterotrimeric GatCAB amidotransferase (AdT) complex, composed of A, B and C subunits.

The protein resides in the mitochondrion. The protein localises to the plastid. It localises to the chloroplast stroma. It carries out the reaction L-glutamyl-tRNA(Gln) + L-glutamine + ATP + H2O = L-glutaminyl-tRNA(Gln) + L-glutamate + ADP + phosphate + H(+). In terms of biological role, allows the formation of correctly charged Gln-tRNA(Gln) through the transamidation of misacylated Glu-tRNA(Gln) in chloroplasts and mitochondria. The reaction takes place in the presence of glutamine and ATP through an activated gamma-phospho-Glu-tRNA(Gln). This is Glutamyl-tRNA(Gln) amidotransferase subunit A, chloroplastic/mitochondrial from Sorghum bicolor (Sorghum).